We begin with the raw amino-acid sequence, 686 residues long: Probable metal-nicotianamine transporter YSL4 (686 aa).

The next 14 membrane-spanning stretches (helical) occupy residues 27–47 (WLVT…FCFV), 53–73 (MMTG…FFLL), 96–116 (MFLI…GFAT), 151–171 (FFLI…IMII), 203–223 (VMTI…QWFY), 264–284 (IVNF…YPYL), 308–328 (VFIS…ILVT), 373–393 (IPMF…MVAM), 405–425 (VGVL…ATGL), 441–461 (IFAA…VSGI), 488–508 (AMIA…PCIF), 554–574 (CVEL…LVLV), 596–616 (FFAG…LLLW), and 629–649 (AAVA…SALL).

The protein belongs to the YSL (TC 2.A.67.2) family.

Its subcellular location is the membrane. In terms of biological role, may be involved in the transport of nicotianamine-chelated metals. This Oryza sativa subsp. japonica (Rice) protein is Probable metal-nicotianamine transporter YSL4 (YSL4).